A 338-amino-acid chain; its full sequence is Methionine synthase (338 aa).

Residues histidine 210, cysteine 212, glutamate 234, and cysteine 294 each contribute to the Zn(2+) site.

This sequence belongs to the archaeal MetE family. Zn(2+) is required as a cofactor.

Its pathway is amino-acid biosynthesis; L-methionine biosynthesis via de novo pathway. Its function is as follows. Catalyzes the transfer of a methyl group to L-homocysteine resulting in methionine formation. The physiological methyl donor is unknown. The protein is Methionine synthase of Pyrococcus horikoshii (strain ATCC 700860 / DSM 12428 / JCM 9974 / NBRC 100139 / OT-3).